We begin with the raw amino-acid sequence, 261 residues long: Yop proteins translocation protein T (261 aa).

Helical transmembrane passes span 20–40, 44–64, 77–97, 131–151, 180–200, 214–234, and 239–259; these read FMACFVILPVLSKQLLGGVLL, IVCSLALYVYPAVANQPYIEV, IILGLLIGFVATIPFWALESA, TLITIFFSGGAFLSLLSALFH, ILLIAAVLAAPLLIAMFLAEF, VFVLAMPIKSAIASLLLVIYC, and SHASKAMLLVMDPISLLIPVL.

It belongs to the FliR/MopE/SpaR family.

Its subcellular location is the cell membrane. Component of the yop secretion machinery. In Yersinia pestis, this protein is Yop proteins translocation protein T (yscT).